The chain runs to 254 residues: Transmembrane protein 269 (254 aa).

The next 5 membrane-spanning stretches (helical) occupy residues 44–64 (IINA…FCSF), 69–89 (YCAS…GTMT), 113–135 (LASA…IYVL), 171–191 (LTKG…LFMI), and 210–230 (IVYI…TAFY).

It localises to the membrane. This chain is Transmembrane protein 269, found in Mus musculus (Mouse).